The primary structure comprises 994 residues: Receptor-like protein 6 (994 aa).

The first 25 residues, 1-25, serve as a signal peptide directing secretion; sequence MTGLYSSMSFFLRTIVLLFSTSSFC. Residues 26–946 are Extracellular-facing; it reads NTFASLTQDS…SSSSSSEEDE (921 aa). Asparagine 116, asparagine 134, and asparagine 154 each carry an N-linked (GlcNAc...) asparagine glycan. LRR repeat units lie at residues 122–146, 148–171, 174–199, 205–228, 230–253, 254–278, 280–301, 302–325, 326–349, 350–373, 375–397, 398–421, 423–445, 446–471, 477–497, 498–520, 521–544, 546–569, and 571–595; these read LQHL…EFSK, MRLE…LLQL, LVSL…LFLH, FMNL…EFSY, WSLR…VLLI, PNLE…LRNN, LLKL…ISNL, KHLT…LRSL, SHLS…VSNL, KQLT…LLNL, QLRY…ISQL, SNLE…LFNI, SLTT…NISL, LHNL…VFLS, SLAL…SEFS, SHLE…IRNQ, RNLS…LWRL, ELST…ALSG, and KIVM…GIQY. Residues asparagine 277 and asparagine 287 are each glycosylated (N-linked (GlcNAc...) asparagine). Residues asparagine 420, asparagine 435, and asparagine 442 are each glycosylated (N-linked (GlcNAc...) asparagine). Asparagine 489 is a glycosylation site (N-linked (GlcNAc...) asparagine). N-linked (GlcNAc...) asparagine glycosylation is found at asparagine 522, asparagine 554, and asparagine 561. An LRR 20; degenerate repeat occupies 597–613; sequence LGSYNNFTGYIPPSICG. Residue asparagine 602 is glycosylated (N-linked (GlcNAc...) asparagine). LRR repeat units lie at residues 614–637, 639–663, 665–687, 689–710, 711–737, 739–762, 803–827, 828–851, 852–875, and 877–900; these read LANP…CLEA, MSSL…FMNA, VLSS…LAGC, ALEI…WLNS, LPKL…VWFG, PLLR…YFMN, LTKY…VGIL, KELH…LANL, TNLE…LGTL, and SLEW…QFHR. Asparagine 649 is a glycosylation site (N-linked (GlcNAc...) asparagine). Residue asparagine 701 is glycosylated (N-linked (GlcNAc...) asparagine). Residue asparagine 762 is glycosylated (N-linked (GlcNAc...) asparagine). 2 N-linked (GlcNAc...) asparagine glycosylation sites follow: asparagine 834 and asparagine 850. Residues asparagine 882 and asparagine 902 are each glycosylated (N-linked (GlcNAc...) asparagine). The helical transmembrane segment at 947–967 threads the bilayer; that stretch reads LISWIAACLGFAPGMVFGLTM. Over 968–994 the chain is Cytoplasmic; sequence GYIMTSHKHEWFMDTFGRRKGRSTRTR.

This sequence belongs to the RLP family.

The protein resides in the cell membrane. This chain is Receptor-like protein 6, found in Arabidopsis thaliana (Mouse-ear cress).